Reading from the N-terminus, the 870-residue chain is Disks large homolog 2 (870 aa).

2 S-palmitoyl cysteine lipidation sites follow: cysteine 5 and cysteine 7. At serine 28 the chain carries Phosphoserine. Tyrosine 58 carries the phosphotyrosine modification. Phosphoserine is present on serine 65. 2 consecutive PDZ domains span residues 98–184 and 193–279; these read EITL…VRRR and EIKL…VGKP. A phosphoserine mark is found at serine 307, serine 328, serine 360, serine 365, serine 406, and serine 414. The PDZ 3 domain occupies 421–501; it reads KVVLHKGSTG…QTVTIIAQYQ (81 aa). The residue at position 505 (tyrosine 505) is a Phosphotyrosine. Phosphoserine occurs at positions 528, 530, 553, 627, and 635. The 71-residue stretch at 536-606 folds into the SH3 domain; that stretch reads KRSLYVRAMF…PSKRRVERKE (71 aa). The Guanylate kinase-like domain maps to 680 to 855; sequence TRPVIILGPM…IYNQCKLVIE (176 aa). Residues tyrosine 750 and tyrosine 755 each carry the phosphotyrosine modification.

The protein belongs to the MAGUK family. As to quaternary structure, interacts through its PDZ domains with NETO1. Interacts with NOS1/nNOS through second PDZ domain. Interacts with KCNJ2/Kir2.1 (via C-terminus) through one of its PDZ domains. Interacts with KCNJ4, Interacts with FRMPD4 (via C-terminus). Interacts with LRFN1, LRFN2 and LRFN4. Interacts with FASLG. Interacts with KCNJ4. Interacts with ADAM22. Interacts with DGKI (via PDZ-binding motif). In terms of processing, palmitoylation of isoform 1 is not required for targeting to postsynaptic density.

The protein resides in the cell membrane. Its subcellular location is the postsynaptic density. It localises to the synapse. The protein localises to the membrane. It is found in the cell projection. The protein resides in the axon. Its subcellular location is the perikaryon. In terms of biological role, required for perception of chronic pain through NMDA receptor signaling. Regulates surface expression of NMDA receptors in dorsal horn neurons of the spinal cord. Interacts with the cytoplasmic tail of NMDA receptor subunits as well as inward rectifying potassium channels. Involved in regulation of synaptic stability at cholinergic synapses. Part of the postsynaptic protein scaffold of excitatory synapses. This chain is Disks large homolog 2 (DLG2), found in Homo sapiens (Human).